The chain runs to 396 residues: Cellular tumor antigen p53 (396 aa).

The segment at 1-44 (MADLAENVSLPLSQESFEDLWKMNLNLVAVQPPETESWVGYDNF) is transcription activation (acidic). The tract at residues 63–89 (ATEPAPQPSISTLDTGSPPTSTVPTTS) is disordered. The span at 77–89 (TGSPPTSTVPTTS) shows a compositional bias: low complexity. A DNA-binding region spans residues 90–281 (DYPGALGFQL…KTEEINLKKQ (192 aa)). Zn(2+)-binding residues include C164, H167, C227, and C231. An interaction with DNA region spans residues 262-269 (RVCACPGR). The short motif at 297–317 (KRAMKEASLPAPQPGASKKTK) is the Bipartite nuclear localization signal element. The disordered stretch occupies residues 301–322 (KEASLPAPQPGASKKTKSSPAV). An oligomerization region spans residues 325-356 (DEIYTLQIRGKEKYEMLKKFNDSLELSELVPV). The Nuclear export signal signature appears at 339 to 350 (EMLKKFNDSLEL). The interval 369–392 (KRVAKRDFGVGPKKRKKLLVKEEK) is basic (repression of DNA-binding).

Belongs to the p53 family. As to quaternary structure, binds DNA as a homotetramer. Zn(2+) is required as a cofactor.

The protein resides in the cytoplasm. It is found in the nucleus. Its function is as follows. Multifunctional transcription factor that induces cell cycle arrest, DNA repair or apoptosis upon binding to its target DNA sequence. Acts as a tumor suppressor in many tumor types; induces growth arrest or apoptosis depending on the physiological circumstances and cell type. Negatively regulates cell division by controlling expression of a set of genes required for this process. One of the activated genes is an inhibitor of cyclin-dependent kinases. Apoptosis induction seems to be mediated either by stimulation of BAX and FAS antigen expression, or by repression of Bcl-2 expression. This Oncorhynchus mykiss (Rainbow trout) protein is Cellular tumor antigen p53 (tp53).